Here is a 391-residue protein sequence, read N- to C-terminus: Putative gustatory receptor 98a (391 aa).

The Cytoplasmic segment spans residues 1–31; sequence MEQMSGELHAASLLYMRRLMKCLGMLPFGQN. Residues 32-52 traverse the membrane as a helical segment; the sequence is LFSKGFCYVLLFVSLGFSSYW. The Extracellular segment spans residues 53-74; the sequence is RFSFDYEFDYDFLNDRFSSTID. The helical transmembrane segment at 75 to 95 threads the bilayer; it reads LSNFVALVLGHAIIVLELLWG. Residues 96–128 lie on the Cytoplasmic side of the membrane; sequence NCSKDVDRQLQAIHSQIKLQLGTSNSTDRVRRY. A helical membrane pass occupies residues 129-149; sequence CNWIYGSLIIRWLIFIVVTIY. The Extracellular segment spans residues 150 to 173; the sequence is SNRALTINATYSELVFLARFSEFT. Asparagine 157 carries an N-linked (GlcNAc...) asparagine glycan. Residues 174–194 form a helical membrane-spanning segment; the sequence is LYCAVILFIYQELIVGGSNVL. The Cytoplasmic portion of the chain corresponds to 195–239; the sequence is DELYRTRYEMWSIRRLSLQKLAKLQAIHNSLWQAIRCLECYFQLS. The chain crosses the membrane as a helical span at residues 240–260; that stretch reads LITLLMKFFIDTSALPYWLYL. Topologically, residues 261–272 are extracellular; that stretch reads SRVEHTRVAVQH. The chain crosses the membrane as a helical span at residues 273-293; that stretch reads YVATVECIKLLEIVVPCYLCT. The Cytoplasmic portion of the chain corresponds to 294 to 347; sequence RCDAMQRKFLSMFYTVTTDRRSSQLNAALRSLNLQLSQEKYKFSAGGMVDINTE. Residues 348–368 form a helical membrane-spanning segment; the sequence is MLGKFFFGMISYIVICIQFSI. Residues 369–391 are Extracellular-facing; the sequence is NFRAKKMSNEQMSQNITSTSAPI. Asparagine 383 carries N-linked (GlcNAc...) asparagine glycosylation.

Belongs to the insect chemoreceptor superfamily. Gustatory receptor (GR) family. Gr2a subfamily.

It is found in the cell membrane. In terms of biological role, probable gustatory receptor which mediates acceptance or avoidance behavior, depending on its substrates. The sequence is that of Putative gustatory receptor 98a (Gr98a) from Drosophila melanogaster (Fruit fly).